Here is a 482-residue protein sequence, read N- to C-terminus: ATP synthase subunit beta (482 aa).

168 to 175 (GGAGVGKT) contacts ATP.

Belongs to the ATPase alpha/beta chains family. As to quaternary structure, F-type ATPases have 2 components, CF(1) - the catalytic core - and CF(0) - the membrane proton channel. CF(1) has five subunits: alpha(3), beta(3), gamma(1), delta(1), epsilon(1). CF(0) has three main subunits: a(1), b(2) and c(9-12). The alpha and beta chains form an alternating ring which encloses part of the gamma chain. CF(1) is attached to CF(0) by a central stalk formed by the gamma and epsilon chains, while a peripheral stalk is formed by the delta and b chains.

The protein localises to the cell membrane. It catalyses the reaction ATP + H2O + 4 H(+)(in) = ADP + phosphate + 5 H(+)(out). Its function is as follows. Produces ATP from ADP in the presence of a proton gradient across the membrane. The catalytic sites are hosted primarily by the beta subunits. This is ATP synthase subunit beta from Corynebacterium urealyticum (strain ATCC 43042 / DSM 7109).